Consider the following 310-residue polypeptide: Ribosomal RNA small subunit methyltransferase H (310 aa).

Residues 32 to 34 (GGH), aspartate 52, phenylalanine 79, aspartate 100, and glutamine 107 each bind S-adenosyl-L-methionine.

This sequence belongs to the methyltransferase superfamily. RsmH family.

It is found in the cytoplasm. The catalysed reaction is cytidine(1402) in 16S rRNA + S-adenosyl-L-methionine = N(4)-methylcytidine(1402) in 16S rRNA + S-adenosyl-L-homocysteine + H(+). In terms of biological role, specifically methylates the N4 position of cytidine in position 1402 (C1402) of 16S rRNA. This chain is Ribosomal RNA small subunit methyltransferase H, found in Bacillus cytotoxicus (strain DSM 22905 / CIP 110041 / 391-98 / NVH 391-98).